Reading from the N-terminus, the 580-residue chain is External alternative NAD(P)H-ubiquinone oxidoreductase B3, mitochondrial (580 aa).

The transit peptide at 1–38 (MRPFAYFERLSQAFHDYPSLSKILVVSTISGGGLIVYS) directs the protein to the mitochondrion. 57-87 (KVVLLGTGWAGASFLKTLNNSSYEVQVISPR) contributes to the FAD binding site. 221–257 (LHFVVVGGGPTGVEFASELHDFVNEDLVKLYPKAKNL) is an NAD(+) binding site. The EF-hand domain maps to 377-412 (KVMEDIAAIFKKADKENSGTLTMKEFHEVMSDICDR). Residues D390, S394, T396, and E401 each coordinate Ca(2+). Positions 571 to 580 (FIFGRDSSRI) match the Microbody targeting signal motif.

This sequence belongs to the NADH dehydrogenase family. FAD serves as cofactor. In terms of tissue distribution, expressed at low levels in seedlings, roots, stems, buds and flowers and, to a lower extent, in leaves and cotyledons.

The protein localises to the mitochondrion inner membrane. The protein resides in the peroxisome. The enzyme catalyses a quinone + NADH + H(+) = a quinol + NAD(+). It carries out the reaction a ubiquinone + NADH + H(+) = a ubiquinol + NAD(+). In terms of biological role, alternative NADH-ubiquinone oxidoreductase which catalyzes the oxidation of mitochondrial NADH does not translocate protons across the inner mitochondrial membrane. The polypeptide is External alternative NAD(P)H-ubiquinone oxidoreductase B3, mitochondrial (NDB3) (Arabidopsis thaliana (Mouse-ear cress)).